The following is a 254-amino-acid chain: tRNA uridine(34) hydroxylase (254 aa).

One can recognise a Rhodanese domain in the interval 123-217 (QDPNVILLDT…YLESIPESES (95 aa)). Residue C177 is the Cysteine persulfide intermediate of the active site.

Belongs to the TrhO family.

The enzyme catalyses uridine(34) in tRNA + AH2 + O2 = 5-hydroxyuridine(34) in tRNA + A + H2O. Catalyzes oxygen-dependent 5-hydroxyuridine (ho5U) modification at position 34 in tRNAs. The protein is tRNA uridine(34) hydroxylase of Legionella pneumophila (strain Corby).